The sequence spans 676 residues: Hemin receptor (676 aa).

An N-terminal signal peptide occupies residues 1 to 28 (MLRSTSDRFRWSSLSLAIACTLPLATQA). A TonB box motif is present at residues 44–51 (DTMVVTAT). Residues 56-167 (SSFEAPMMVT…LGGVIAYETV (112 aa)) enclose the TBDR plug domain. The TBDR beta-barrel domain maps to 178 to 676 (NSGYRVYSSA…NVKFFVSYQW (499 aa)). Positions 659–676 (QGIPQDGRNVKFFVSYQW) match the TonB C-terminal box motif.

The protein belongs to the TonB-dependent receptor family.

Its subcellular location is the cell outer membrane. This protein is involved in the initial step of iron uptake by binding hemin, an iron chelatin siderophore that allows the bacteria to extract iron from the environment. The protein is Hemin receptor (hmuR) of Yersinia pestis.